Consider the following 881-residue polypeptide: Valine--tRNA ligase (881 aa).

Residues 49–59 (PNVTGKLHLGH) carry the 'HIGH' region motif. The 'KMSKS' region motif lies at 526-530 (KMSKS). An ATP-binding site is contributed by Lys529. The stretch at 810–881 (LADLINLDEE…VRQRLADLEK (72 aa)) forms a coiled coil.

This sequence belongs to the class-I aminoacyl-tRNA synthetase family. ValS type 1 subfamily. In terms of assembly, monomer.

It localises to the cytoplasm. The enzyme catalyses tRNA(Val) + L-valine + ATP = L-valyl-tRNA(Val) + AMP + diphosphate. In terms of biological role, catalyzes the attachment of valine to tRNA(Val). As ValRS can inadvertently accommodate and process structurally similar amino acids such as threonine, to avoid such errors, it has a 'posttransfer' editing activity that hydrolyzes mischarged Thr-tRNA(Val) in a tRNA-dependent manner. This chain is Valine--tRNA ligase, found in Bacillus thuringiensis subsp. konkukian (strain 97-27).